The following is a 327-amino-acid chain: ATPase ASNA1 homolog (327 aa).

Residue 26–33 participates in ATP binding; that stretch reads KGGVGKTT. The active site involves Asp57. ATP contacts are provided by Glu238 and Asn265. 2 residues coordinate Zn(2+): Cys274 and Cys277.

This sequence belongs to the arsA ATPase family. As to quaternary structure, homodimer.

It localises to the cytoplasm. Its subcellular location is the endoplasmic reticulum. In terms of biological role, ATPase required for the post-translational delivery of tail-anchored (TA) proteins to the endoplasmic reticulum. Recognizes and selectively binds the transmembrane domain of TA proteins in the cytosol. This complex then targets to the endoplasmic reticulum by membrane-bound receptors, where the tail-anchored protein is released for insertion. This process is regulated by ATP binding and hydrolysis. ATP binding drives the homodimer towards the closed dimer state, facilitating recognition of newly synthesized TA membrane proteins. ATP hydrolysis is required for insertion. Subsequently, the homodimer reverts towards the open dimer state, lowering its affinity for the membrane-bound receptor, and returning it to the cytosol to initiate a new round of targeting. This is ATPase ASNA1 homolog from Entamoeba histolytica (strain ATCC 30459 / HM-1:IMSS / ABRM).